Consider the following 878-residue polypeptide: Pyruvate dehydrogenase phosphatase regulatory subunit, mitochondrial (878 aa).

The transit peptide at 1 to 93 (MLYRLLSIVQ…CAGILSTARH (93 aa)) directs the protein to the mitochondrion.

Belongs to the GcvT family. In terms of assembly, heterodimer of a catalytic (PDP1) and a regulatory (PDPR) subunit.

Its subcellular location is the mitochondrion matrix. In terms of biological role, decreases the sensitivity of PDP1 to magnesium ions, and this inhibition is reversed by the polyamine spermine. This Mus musculus (Mouse) protein is Pyruvate dehydrogenase phosphatase regulatory subunit, mitochondrial (Pdpr).